A 249-amino-acid polypeptide reads, in one-letter code: Aspartate/glutamate leucyltransferase (249 aa).

It belongs to the R-transferase family. Bpt subfamily.

The protein resides in the cytoplasm. It catalyses the reaction N-terminal L-glutamyl-[protein] + L-leucyl-tRNA(Leu) = N-terminal L-leucyl-L-glutamyl-[protein] + tRNA(Leu) + H(+). It carries out the reaction N-terminal L-aspartyl-[protein] + L-leucyl-tRNA(Leu) = N-terminal L-leucyl-L-aspartyl-[protein] + tRNA(Leu) + H(+). Functionally, functions in the N-end rule pathway of protein degradation where it conjugates Leu from its aminoacyl-tRNA to the N-termini of proteins containing an N-terminal aspartate or glutamate. This chain is Aspartate/glutamate leucyltransferase, found in Azorhizobium caulinodans (strain ATCC 43989 / DSM 5975 / JCM 20966 / LMG 6465 / NBRC 14845 / NCIMB 13405 / ORS 571).